The chain runs to 73 residues: Translation initiation factor IF-1 (73 aa).

The region spanning 1 to 73 (MAKKDGVIEI…TRGRIVYRYK (73 aa)) is the S1-like domain.

It belongs to the IF-1 family. As to quaternary structure, component of the 30S ribosomal translation pre-initiation complex which assembles on the 30S ribosome in the order IF-2 and IF-3, IF-1 and N-formylmethionyl-tRNA(fMet); mRNA recruitment can occur at any time during PIC assembly.

The protein localises to the cytoplasm. One of the essential components for the initiation of protein synthesis. Stabilizes the binding of IF-2 and IF-3 on the 30S subunit to which N-formylmethionyl-tRNA(fMet) subsequently binds. Helps modulate mRNA selection, yielding the 30S pre-initiation complex (PIC). Upon addition of the 50S ribosomal subunit IF-1, IF-2 and IF-3 are released leaving the mature 70S translation initiation complex. The chain is Translation initiation factor IF-1 from Clavibacter michiganensis subsp. michiganensis (strain NCPPB 382).